The following is a 1368-amino-acid chain: MAYSFTEKKRIRKSFAKRATVHQVPFLLATQIQSYAQFLQEHASVAQRKSEGLQAAFNAIFPIVSHNGLARMEFVSYHLSNPPFDVKECQQRGLTFHSALRAKVRLIINDRENPTKVKEIKEQEVYMGEIPLMTSTGSFVINGTERVIVSQLHRSPGVFFEHDKGKTHSSGKLLFSARIIPYRGSWLDFEFDPKDILYFRVDRRRKMPVTILLKSIGLTPEQILAHFFVFDNFTLKSDGALMEFVPERLRGEVARFDISDKNGKVVVEKDKRINAKHIRDLDAAGTKLISVPEDYLLGRVLAKNIVDPDTGEVLANANDELTEGVLEKLRDAGVKEIQTLYTNDLDQGPYMSQTLRTDDTVDQTAARIAIYRMMRPGEPPTEDAVEALFQRLFYSEDSYDLSRVGRMKVNSRLNRSEGTGPMVLTDDDILDTIKLLVNLRNGKGEVDDIDHLGNRRVRCVGELAENQFRAGLSRVERAVKERLGQAETENLMPHDLINSKPISSAIREFFGSSQLSQFMDQTNPLSEVTHKRRISALGPGGLTRERAGFEVRDVHPTHYGRVCPIETPEGPNIGLINSLALYAQLNDYGFLETPYRKVENSKLTDQVDYLSAIEEGKYVVAQANATVDKDGNLVDELVSAREGSERETRMVTPDRVQYIDVAPSQIVSAAASLVPFLEHDDANRALMGANMQRQAVPCLRADKPLVGTGVERTVAVDSGTAVQATRGGLVDYVDANRVVIRVNDDEAVAGEVGVDIYNLIKYTRSNQNTNINQRPMVKVGDIVARGDVIADGASTDLGELALGQNMLVAFMPWNGYNFEDSILISERVVAEDRYTSIHIEELSVVARDTKLGPEEITRDISNLAEAQLARLDESGITYIGAEVEAGDVMVGKVTPKGETQLTPEEKLLRAIFGEKASDVKDTSLRVPSGMSGTVIDVQVFTREGVTRDKRAQSIIDEELKRYRLDLNDQLRIVEGDAFQRLERLLVGKVVNGGPKKLAKGTALTKEYLADLDKWHWFDIRPSDDDVATQLEAVKEAIEQKRHDFDLAFEEKRKKLTQGDELPPGVIKMVKVYLAVKRRLQPGDKMAGRHGNKGVVSKITPIEDMPYMADGTPADIVLNPLGVPSRMNVGQILETHLGWAARGLGERIGNMLKAQAKAAEMRKLLGQIYNESGKVEDLDSLSDAEVLELAENLKKGVPFATPVFDGAHEDEIRRMLDLAYPEDIAKEKGLTASKQQVTLFDGRTGEAFERPVTLGVMHMLKLHHLVDDKMHARSTGPYSLVTQQPLGGKAQFGGQRFGEMEVWALEAYGASYVLQEMLTVKSDDVNGRTKVYENIVKGEHSIDAGMPESFNVLVKEIRSLGIDIDLERN.

This sequence belongs to the RNA polymerase beta chain family. The RNAP catalytic core consists of 2 alpha, 1 beta, 1 beta' and 1 omega subunit. When a sigma factor is associated with the core the holoenzyme is formed, which can initiate transcription.

The catalysed reaction is RNA(n) + a ribonucleoside 5'-triphosphate = RNA(n+1) + diphosphate. DNA-dependent RNA polymerase catalyzes the transcription of DNA into RNA using the four ribonucleoside triphosphates as substrates. In Ralstonia nicotianae (strain ATCC BAA-1114 / GMI1000) (Ralstonia solanacearum), this protein is DNA-directed RNA polymerase subunit beta.